The chain runs to 281 residues: LIM domain-containing protein G (281 aa).

LIM zinc-binding domains are found at residues L40–N101, D141–V205, and N206–P262.

The sequence is that of LIM domain-containing protein G (limG) from Dictyostelium discoideum (Social amoeba).